We begin with the raw amino-acid sequence, 861 residues long: Probable linoleate 9S-lipoxygenase 3 (861 aa).

Positions 33–160 (FTDLASSLTG…NYKSDRIFFA (128 aa)) constitute a PLAT domain. One can recognise a Lipoxygenase domain in the interval 163 to 861 (PYLPSDTPEL…GKGIPNSVSI (699 aa)). Positions 220 to 247 (TLGGSAEYPYPRRGRTGRPPTRTDPKSE) are disordered. Fe cation is bound by residues H522, H527, H713, N717, and I861.

The protein belongs to the lipoxygenase family. Monomer. Fe cation serves as cofactor. As to expression, expressed in tubers and roots. Not detected in leaves, flowers, stems, shoot tips, or axillary buds.

It is found in the cytoplasm. The catalysed reaction is (9Z,12Z)-octadecadienoate + O2 = (9S)-hydroperoxy-(10E,12Z)-octadecadienoate. It functions in the pathway lipid metabolism; oxylipin biosynthesis. Functionally, plant lipoxygenases may be involved in a number of diverse aspects of plant physiology including growth and development, pest resistance, and senescence or responses to wounding. Catalyzes the hydroperoxidation of lipids containing a cis,cis-1,4-pentadiene structure. In Solanum tuberosum (Potato), this protein is Probable linoleate 9S-lipoxygenase 3 (LOX1.3).